The following is a 117-amino-acid chain: Neurotoxic enhancer CSTX-13 (117 aa).

A signal peptide spans methionine 1–alanine 20. Positions glutamate 21–arginine 47 are excised as a propeptide. 4 disulfides stabilise this stretch: cysteine 50–cysteine 65, cysteine 57–cysteine 74, cysteine 64–cysteine 95, and cysteine 76–cysteine 93. The propeptide occupies arginine 82 to arginine 87. Threonine 116 is subject to Threonine amide.

This sequence belongs to the neurotoxin 19 (CSTX) family. 12 subfamily. As to quaternary structure, heterodimer of A and B chains; disulfide-linked. Interacts with CSTX-1 (AC P81694) (Kd=430 nM), and with CSTX-9 (AC P58604) (Kd=370 nM). As to expression, expressed by the venom gland.

It is found in the secreted. The protein resides in the target cell membrane. Functionally, synergistic toxin that induces or increases a cytolytic effect when combined with CSTX-1 (AC P81694) or CSTX-9 (AC P58604). When alone, has a weak insecticidal activity, with an unknown molecular target. This is Neurotoxic enhancer CSTX-13 from Cupiennius salei (American wandering spider).